Reading from the N-terminus, the 515-residue chain is Protein disulfide-isomerase (515 aa).

Residues 1–20 (MRSFAPWLVSLLGASAVVAA) form the signal peptide. Thioredoxin domains are found at residues 21 to 132 (ADTE…QSLP) and 339 to 470 (VLDG…ENGK). Catalysis depends on nucleophile residues Cys54, Cys57, Cys389, and Cys392. Disulfide bonds link Cys54-Cys57 and Cys389-Cys392. The disordered stretch occupies residues 478–515 (VASEETQEGGDVTEAAPSATEAETPAATDDEKAEHDEL). Over residues 490–504 (TEAAPSATEAETPAA) the composition is skewed to low complexity. Residues 506–515 (DDEKAEHDEL) show a composition bias toward basic and acidic residues. A Prevents secretion from ER motif is present at residues 512–515 (HDEL).

It belongs to the protein disulfide isomerase family.

It localises to the endoplasmic reticulum lumen. The enzyme catalyses Catalyzes the rearrangement of -S-S- bonds in proteins.. Functionally, participates in the folding of proteins containing disulfide bonds, may be involved in glycosylation, prolyl hydroxylation and triglyceride transfer. The chain is Protein disulfide-isomerase (pdiA) from Aspergillus niger.